A 758-amino-acid chain; its full sequence is Probable adenosylcobalamin-dependent ribonucleoside-triphosphate reductase (758 aa).

The cysteines at positions 194 and 459 are disulfide-linked. The disordered stretch occupies residues 233–256 (IIIKGQLPPPPPQQQPQQQQQQHG). Catalysis depends on residues cysteine 448 and glutamate 450.

The protein belongs to the class II ribonucleoside-triphosphate reductase family. As to quaternary structure, monomer. Requires adenosylcob(III)alamin as cofactor.

It carries out the reaction a 2'-deoxyribonucleoside 5'-triphosphate + [thioredoxin]-disulfide + H2O = a ribonucleoside 5'-triphosphate + [thioredoxin]-dithiol. The polypeptide is Probable adenosylcobalamin-dependent ribonucleoside-triphosphate reductase (rtpR) (Dictyostelium discoideum (Social amoeba)).